The primary structure comprises 482 residues: Sugar transporter ERD6-like 16 (482 aa).

A run of 12 helical transmembrane segments spans residues 42-62 (LMVLFSTFVAVCGSFEFGSCV), 80-100 (LAEFSMFGSILTIGAMLGAVM), 117-137 (SACFCITGWLAVFFTKGALLL), 142-162 (FFTGYGIGVFSYVVPVYIAEI), 173-193 (TLNQLMIVIGSSVSFLIGSLI), 197-217 (TLALTGLAPCIVLLFGLCFIP), 280-300 (VIIGVSLMVFQQFVGINGIGF), 316-336 (LGTIAIACVQVPITVLGTILI), 344-364 (LIMISAGGIFLGCILTGTSFL), 382-402 (GVLIYVAAFSIGMGPVPWVIM), 413-433 (IAGSLVVLVNWSGAWAVSYTF), and 443-463 (GTFYLYSAFAAATIIFVAKMV).

This sequence belongs to the major facilitator superfamily. Sugar transporter (TC 2.A.1.1) family.

Its subcellular location is the membrane. Its function is as follows. Sugar transporter. The sequence is that of Sugar transporter ERD6-like 16 from Arabidopsis thaliana (Mouse-ear cress).